Here is a 102-residue protein sequence, read N- to C-terminus: Aspartyl/glutamyl-tRNA(Asn/Gln) amidotransferase subunit C (102 aa).

It belongs to the GatC family. Heterotrimer of A, B and C subunits.

The enzyme catalyses L-glutamyl-tRNA(Gln) + L-glutamine + ATP + H2O = L-glutaminyl-tRNA(Gln) + L-glutamate + ADP + phosphate + H(+). The catalysed reaction is L-aspartyl-tRNA(Asn) + L-glutamine + ATP + H2O = L-asparaginyl-tRNA(Asn) + L-glutamate + ADP + phosphate + 2 H(+). In terms of biological role, allows the formation of correctly charged Asn-tRNA(Asn) or Gln-tRNA(Gln) through the transamidation of misacylated Asp-tRNA(Asn) or Glu-tRNA(Gln) in organisms which lack either or both of asparaginyl-tRNA or glutaminyl-tRNA synthetases. The reaction takes place in the presence of glutamine and ATP through an activated phospho-Asp-tRNA(Asn) or phospho-Glu-tRNA(Gln). This chain is Aspartyl/glutamyl-tRNA(Asn/Gln) amidotransferase subunit C, found in Bordetella avium (strain 197N).